We begin with the raw amino-acid sequence, 303 residues long: Uricase (303 aa).

Ala2 carries the N-acetylalanine modification. Residues Lys10 and Lys23 each carry the N6-acetyllysine; alternate modification. Residues Lys10 and Lys23 each carry the N6-succinyllysine; alternate modification. Lys23 functions as the Charge relay system in the catalytic mechanism. An N6-acetyllysine mark is found at Lys27 and Lys36. Phosphoserine occurs at positions 39 and 63. The active-site Charge relay system is the Thr68. Residues Thr68 and Asp69 each contribute to the urate site. Lys118, Lys122, and Lys164 each carry N6-acetyllysine. Urate is bound at residue Phe170. N6-acetyllysine is present on residues Lys175 and Lys185. Residue Arg187 participates in urate binding. N6-acetyllysine; alternate occurs at positions 220 and 227. An N6-succinyllysine; alternate mark is found at Lys220 and Lys227. At Ser231 the chain carries Phosphoserine. Urate is bound by residues Val234, Gln235, and Asn261. Catalysis depends on His263, which acts as the Charge relay system. At Lys277 the chain carries N6-acetyllysine. At Tyr288 the chain carries Phosphotyrosine. A Microbody targeting signal motif is present at residues 301–303 (SRL).

It belongs to the uricase family. Acetylation of Lys-118, Lys-164 and Lys-290 is observed in liver mitochondria from fasted mice but not from fed mice. May be deacetylated by Sirt5; however it is unclear whether Sirt5 mediates deacetylation or desuccinylation of Uox; additional evidence is required to validate these results.

It is found in the peroxisome. It localises to the mitochondrion. It catalyses the reaction urate + O2 + H2O = 5-hydroxyisourate + H2O2. Its pathway is purine metabolism; urate degradation; (S)-allantoin from urate: step 1/3. Its function is as follows. Catalyzes the oxidation of uric acid to 5-hydroxyisourate, which is further processed to form (S)-allantoin. This is Uricase (Uox) from Mus musculus (Mouse).